Here is a 374-residue protein sequence, read N- to C-terminus: Anhydro-N-acetylmuramic acid kinase (374 aa).

G12–D19 provides a ligand contact to ATP.

Belongs to the anhydro-N-acetylmuramic acid kinase family.

The enzyme catalyses 1,6-anhydro-N-acetyl-beta-muramate + ATP + H2O = N-acetyl-D-muramate 6-phosphate + ADP + H(+). The protein operates within amino-sugar metabolism; 1,6-anhydro-N-acetylmuramate degradation. It functions in the pathway cell wall biogenesis; peptidoglycan recycling. Catalyzes the specific phosphorylation of 1,6-anhydro-N-acetylmuramic acid (anhMurNAc) with the simultaneous cleavage of the 1,6-anhydro ring, generating MurNAc-6-P. Is required for the utilization of anhMurNAc either imported from the medium or derived from its own cell wall murein, and thus plays a role in cell wall recycling. This Sodalis glossinidius (strain morsitans) protein is Anhydro-N-acetylmuramic acid kinase.